The following is a 739-amino-acid chain: UPF0313 protein YgiQ (739 aa).

One can recognise a Radical SAM core domain in the interval Ala-372–Ala-650. Residues Cys-386, Cys-390, and Cys-393 each contribute to the [4Fe-4S] cluster site. Residues Arg-685–Arg-739 form a disordered region. The segment covering Met-704–Pro-724 has biased composition (polar residues). Residues Ala-729–Arg-739 show a composition bias toward basic residues.

The protein belongs to the UPF0313 family. It depends on [4Fe-4S] cluster as a cofactor.

The protein is UPF0313 protein YgiQ (ygiQ) of Escherichia coli (strain K12).